The chain runs to 87 residues: UPF0235 protein TGRD_618 (87 aa).

The protein belongs to the UPF0235 family.

This is UPF0235 protein TGRD_618 from Endomicrobium trichonymphae.